Here is a 213-residue protein sequence, read N- to C-terminus: 3-isopropylmalate dehydratase small subunit (213 aa).

It belongs to the LeuD family. LeuD type 1 subfamily. As to quaternary structure, heterodimer of LeuC and LeuD.

It catalyses the reaction (2R,3S)-3-isopropylmalate = (2S)-2-isopropylmalate. Its pathway is amino-acid biosynthesis; L-leucine biosynthesis; L-leucine from 3-methyl-2-oxobutanoate: step 2/4. Catalyzes the isomerization between 2-isopropylmalate and 3-isopropylmalate, via the formation of 2-isopropylmaleate. This Neisseria meningitidis serogroup C / serotype 2a (strain ATCC 700532 / DSM 15464 / FAM18) protein is 3-isopropylmalate dehydratase small subunit.